The primary structure comprises 860 residues: Leucine--tRNA ligase (860 aa).

The 'HIGH' region motif lies at 42 to 52 (PYPSGRLHMGH). The 'KMSKS' region signature appears at 619–623 (KMSKS). K622 provides a ligand contact to ATP.

This sequence belongs to the class-I aminoacyl-tRNA synthetase family.

It localises to the cytoplasm. The catalysed reaction is tRNA(Leu) + L-leucine + ATP = L-leucyl-tRNA(Leu) + AMP + diphosphate. The sequence is that of Leucine--tRNA ligase from Escherichia coli O45:K1 (strain S88 / ExPEC).